Consider the following 369-residue polypeptide: Chorismate synthase (369 aa).

Residues R48 and R54 each coordinate NADP(+). FMN-binding positions include 125–127, 238–239, G278, 293–297, and R319; these read RSS, NA, and KPTSS.

The protein belongs to the chorismate synthase family. As to quaternary structure, homotetramer. Requires FMNH2 as cofactor.

The enzyme catalyses 5-O-(1-carboxyvinyl)-3-phosphoshikimate = chorismate + phosphate. It participates in metabolic intermediate biosynthesis; chorismate biosynthesis; chorismate from D-erythrose 4-phosphate and phosphoenolpyruvate: step 7/7. Functionally, catalyzes the anti-1,4-elimination of the C-3 phosphate and the C-6 proR hydrogen from 5-enolpyruvylshikimate-3-phosphate (EPSP) to yield chorismate, which is the branch point compound that serves as the starting substrate for the three terminal pathways of aromatic amino acid biosynthesis. This reaction introduces a second double bond into the aromatic ring system. This is Chorismate synthase from Burkholderia mallei (strain NCTC 10229).